The chain runs to 550 residues: Integral membrane protein DGCR2/IDD (550 aa).

The N-terminal stretch at 1–20 is a signal peptide; the sequence is MVPKADSGAFLLLFLLVLTV. The Extracellular segment spans residues 21 to 349; it reads TEPLRPELRC…LFDSMASGMR (329 aa). The LDL-receptor class A domain maps to 28–68; that stretch reads LRCNPGQFACRSGTIQCIPLPWQCDGWATCEDESDEANCPE. Intrachain disulfides connect Cys-30–Cys-44, Cys-37–Cys-57, and Cys-51–Cys-66. The tract at residues 69–92 is disordered; that stretch reads VTGEVRPHHGKEAVDPRQGRARGG. The segment covering 71–92 has biased composition (basic and acidic residues); sequence GEVRPHHGKEAVDPRQGRARGG. The region spanning 115–241 is the C-type lectin domain; sequence CPTGWHHYEG…FCAQLQCFHF (127 aa). 2 cysteine pairs are disulfide-bonded: Cys-145/Cys-265 and Cys-233/Cys-257. N-linked (GlcNAc...) asparagine glycosylation is found at Asn-149 and Asn-196. Residues 270 to 333 enclose the VWFC domain; that stretch reads TCVDIKDNVV…PKECCKFMCL (64 aa). Residues 350–368 traverse the membrane as a helical segment; it reads LVVSCISSFLILSLLLFMV. Topologically, residues 369-550 are cytoplasmic; sequence HRLRQRRRER…HSRSSLNTVV (182 aa). Phosphoserine is present on Ser-381. A disordered region spans residues 500 to 550; it reads AGASLADLEDSADSSSALLVPPDPAQSGSTPAAEALPGGGRHSRSSLNTVV.

In terms of tissue distribution, predominantly expressed in brain, heart, lung and fetal kidney. Low levels in liver and adult kidney.

The protein localises to the membrane. Its function is as follows. Putative adhesion receptor, that could be involved in cell-cell or cell-matrix interactions required for normal cell differentiation and migration. This chain is Integral membrane protein DGCR2/IDD (DGCR2), found in Homo sapiens (Human).